The following is a 369-amino-acid chain: MTPNIYQQLGLKKVINACGKMTILGVSSVAPEVMQATARAASAFVEIDALVEKTGELVSRYTGAEDSYITSCASAGIAIAVAAAITHGDRARVALMPDSSGMANEVVMLRGHNVDYGAPVTSAIRLGGGRIVEVGSSNLATRWQLESAINEKTAALLYVKSHHCVQKGMLSIDDFVQVAQANHLPLIVDAAAEEDLRGWVASGADMVIYSGAKAFNAPTSGFITGRKTWIAACKAQHQGIARAMKIGKENMVGLVYALENYHQGQTTVTAAQLQPVAEAISAIHGLYADIEQDEAGRAIWRIRVRVNASELGLNAQDVEAQLRGGEIAIYARKYQLHQGVFSLDPRTVAEGEMALIVARLREIAEHAAD.

K213 is modified (N6-(pyridoxal phosphate)lysine).

It belongs to the SelA family. The cofactor is pyridoxal 5'-phosphate.

The enzyme catalyses 2-amino-2-deoxy-D-gluconate 6-phosphate = 2-dehydro-3-deoxy-6-phospho-D-gluconate + NH4(+). In terms of biological role, involved in the catabolism of D-glucosaminate. Catalyzes the conversion of D-glucosaminate 6-phosphate to yield keto-3-deoxygluconate 6-phosphate (KDGP). The chain is D-glucosaminate-6-phosphate ammonia lyase from Salmonella typhimurium (strain 14028s / SGSC 2262).